The chain runs to 336 residues: Atypical chemokine receptor 1 (336 aa).

At 1 to 63 (MGNCLHQAEL…CNLLDDSSLP (63 aa)) the chain is on the extracellular side. N16, N27, and N33 each carry an N-linked (GlcNAc...) asparagine glycan. Cystine bridges form between C51/C276 and C129/C195. Residues 64 to 84 (FFILASVLGILASSTVLFLLF) form a helical membrane-spanning segment. Topologically, residues 85–95 (RPLFRWQLCPG) are cytoplasmic. Residues 96–116 (WPVLAQLAVGSTLFSIVVPIL) traverse the membrane as a helical segment. At 117 to 129 (APGLGNTRSSAPC) the chain is on the extracellular side. The chain crosses the membrane as a helical span at residues 130–153 (SLGYCVWYGSAFAQALLLGCHASL). Residues 154–166 (GPKLGAGQVPGLT) lie on the Cytoplasmic side of the membrane. The chain crosses the membrane as a helical span at residues 167 to 187 (LGLSVGLWGAAALLTLPITLA). The Extracellular segment spans residues 188–207 (SDASDGLCTPIYSTELKALQ). A helical membrane pass occupies residues 208–228 (ATHTVACFAIFVLLPLGLFGA). At 229-244 (KGLKKVLGMGPGPWMN) the chain is on the cytoplasmic side. A helical membrane pass occupies residues 245–265 (ILWVWFIFWWPHGVVLGLDFL). Over 266-287 (VRSKLLLLPTCLAQQVLDLLLN) the chain is Extracellular. The chain crosses the membrane as a helical span at residues 288–308 (LAEALAIVHCVATPLLLALFC). Topologically, residues 309–336 (HQATRTLVPSLPLPERWSSPVDTLGSKS) are cytoplasmic.

It belongs to the G-protein coupled receptor 1 family. Atypical chemokine receptor subfamily.

The protein resides in the early endosome. It is found in the recycling endosome. It localises to the membrane. Atypical chemokine receptor that controls chemokine levels and localization via high-affinity chemokine binding that is uncoupled from classic ligand-driven signal transduction cascades, resulting instead in chemokine sequestration, degradation, or transcytosis. Also known as interceptor (internalizing receptor) or chemokine-scavenging receptor or chemokine decoy receptor. Has a promiscuous chemokine-binding profile, interacting with inflammatory chemokines of both the CXC and the CC subfamilies but not with homeostatic chemokines. Acts as a receptor for chemokines including CCL2, CCL5, CCL7, CCL11, CCL13, CCL14, CCL17, CXCL5, CXCL6, IL8/CXCL8, CXCL11, GRO, RANTES, MCP-1 and TARC. May regulate chemokine bioavailability and, consequently, leukocyte recruitment through two distinct mechanisms: when expressed in endothelial cells, it sustains the abluminal to luminal transcytosis of tissue-derived chemokines and their subsequent presentation to circulating leukocytes; when expressed in erythrocytes, serves as blood reservoir of cognate chemokines but also as a chemokine sink, buffering potential surges in plasma chemokine levels. In Saguinus imperator (Emperor tamarin), this protein is Atypical chemokine receptor 1 (ACKR1).